A 1012-amino-acid chain; its full sequence is Putative cellulose synthase-like protein D5 (1012 aa).

Residues Met1–Val85 form a disordered region. Low complexity predominate over residues Pro20–Gly37. Residues Gly57 to Leu69 are compositionally biased toward basic and acidic residues. 2 consecutive transmembrane segments (helical) span residues Ile150–Val170 and Ala180–Leu200. Residue Asp280 is part of the active site. Positions Pro597–Asp620 are disordered. Positions Gly606–Gly618 are enriched in gly residues. The active site involves Asp717. 6 helical membrane passes run Leu799 to Val819, Thr825 to Val845, Leu871 to Leu891, Ser914 to Val934, Leu948 to Gly968, and Thr978 to Ile998.

This sequence belongs to the glycosyltransferase 2 family. Plant cellulose synthase-like D subfamily.

The protein resides in the golgi apparatus membrane. In terms of biological role, thought to be a Golgi-localized beta-glycan synthase that polymerize the backbones of noncellulosic polysaccharides (hemicelluloses) of plant cell wall. The chain is Putative cellulose synthase-like protein D5 (CSLD5) from Oryza sativa subsp. indica (Rice).